The sequence spans 252 residues: Geranylgeranylglyceryl phosphate synthase (252 aa).

Mg(2+) contacts are provided by aspartate 25 and serine 54. Residues 174–180, 205–206, and 227–228 each bind sn-glycerol 1-phosphate; these read FMDAGSG, GG, and GN.

The protein belongs to the GGGP/HepGP synthase family. Group II subfamily. Homohexamer. Requires Mg(2+) as cofactor.

It carries out the reaction sn-glycerol 1-phosphate + (2E,6E,10E)-geranylgeranyl diphosphate = sn-3-O-(geranylgeranyl)glycerol 1-phosphate + diphosphate. In terms of biological role, prenyltransferase that catalyzes the transfer of the geranylgeranyl moiety of geranylgeranyl diphosphate (GGPP) to the C3 hydroxyl of sn-glycerol-1-phosphate (G1P). The sequence is that of Geranylgeranylglyceryl phosphate synthase from Chitinophaga pinensis (strain ATCC 43595 / DSM 2588 / LMG 13176 / NBRC 15968 / NCIMB 11800 / UQM 2034).